The primary structure comprises 54 residues: Snake venom 5'-nucleotidase (54 aa).

Zn(2+) contacts are provided by D11 and H13. A glycan (N-linked (GlcNAc...) asparagine) is linked at N46.

The protein belongs to the 5'-nucleotidase family. The cofactor is Zn(2+). Venom 5'-nucleotidases (or a part thereof) may be released into the venom via exosome-like vesicles. They may be attached via a GPI anchor to the membrane of these vesicles. Soluble forms of 5'-nucleotidase might be released by cleavage of the ectodomain in the exosome-like vesicles or venom gland cells. Expressed by the venom gland.

It localises to the membrane. The catalysed reaction is a ribonucleoside 5'-phosphate + H2O = a ribonucleoside + phosphate. Its function is as follows. Hydrolyzes nucleotides into nucleosides. Snake venom 5'-nucleotidases are widely distributed among venomous snake taxa, but there is a lack of information about their biological activities. They have been shown to inhibit platelet aggregation. This effect may be due to the liberation of inhibitory AMP or adenosine by its action on ADP released upon initiation of aggregation. Venom 5'-nucleotidases are also known to synergistically act in vivo with other toxins like ADPases, phospholipases, and disintegrins to exert a more pronounced anti-coagulant effect. This chain is Snake venom 5'-nucleotidase, found in Gloydius blomhoffii blomhoffii (Japanese mamushi).